The following is a 625-amino-acid chain: Protein arginine N-methyltransferase skb1 (625 aa).

One can recognise an SAM-dependent MTase PRMT-type domain in the interval 280–588 (LQVPLQPLSY…WRLTDGMRVW (309 aa)). Residues Tyr-296, 305–306 (KY), Glu-359, and 386–387 (DM) contribute to the S-adenosyl-L-methionine site. Active-site proton donor/acceptor residues include Glu-402 and Glu-411.

The protein belongs to the class I-like SAM-binding methyltransferase superfamily. Protein arginine N-methyltransferase family. As to quaternary structure, interacts with the N-terminal regulatory domain of shk1. Shk1, cdc42 and skb1 are able to form a ternary complex in vivo. Interacts with orb6. Interacts with Cdr1 and the Cdr1 inhibitory target Wee1.

The protein localises to the nucleus. It localises to the cell tip. It is found in the cell septum. Its subcellular location is the cytoplasm. The protein resides in the cell cortex. S-adenosyl-L-methionine-dependent protein-arginine N-methyltransferase that can catalyze both the mono- and symmetric (type II) dimethylation of the guanidino nitrogens of arginine residues in target proteins. Delays mitotic entry by inhibiting the Cdr1-Wee1 signaling pathway. Cortical nodes sequester Skb1 from its regulatory targets Cdr1 and Wee1. Positively modulates the shk1 kinase function. May be a mediator of hyperosmotic stress response. Involved in the control of cell polarity by regulating the subcellular localization of Orb6 kinase. This chain is Protein arginine N-methyltransferase skb1, found in Schizosaccharomyces pombe (strain 972 / ATCC 24843) (Fission yeast).